Reading from the N-terminus, the 270-residue chain is Shikimate dehydrogenase (NADP(+)) (270 aa).

Residues 14 to 16 and Thr61 contribute to the shikimate site; that span reads SKS. Catalysis depends on Lys65, which acts as the Proton acceptor. Shikimate is bound by residues Asn86 and Asp101. NADP(+) is bound by residues 126-130, 150-155, and Met213; these read GAGGA and NRTVSK. Residue Tyr215 participates in shikimate binding. Gly237 contacts NADP(+).

It belongs to the shikimate dehydrogenase family. In terms of assembly, homodimer.

It catalyses the reaction shikimate + NADP(+) = 3-dehydroshikimate + NADPH + H(+). It functions in the pathway metabolic intermediate biosynthesis; chorismate biosynthesis; chorismate from D-erythrose 4-phosphate and phosphoenolpyruvate: step 4/7. Involved in the biosynthesis of the chorismate, which leads to the biosynthesis of aromatic amino acids. Catalyzes the reversible NADPH linked reduction of 3-dehydroshikimate (DHSA) to yield shikimate (SA). The protein is Shikimate dehydrogenase (NADP(+)) of Hahella chejuensis (strain KCTC 2396).